We begin with the raw amino-acid sequence, 950 residues long: Protocadherin alpha-6 (950 aa).

An N-terminal signal peptide occupies residues 1–29; the sequence is MVFTPEDRLGKQCLLLPLLLLAAWKVGSG. At 30–697 the chain is on the extracellular side; sequence QLHYSVPEEA…GPEAALVDVN (668 aa). 6 consecutive Cadherin domains span residues 34 to 133, 157 to 242, 243 to 350, 351 to 455, 456 to 565, and 581 to 678; these read SVPE…PPLF, ASDA…APNF, EQSE…VPEI, ALTS…APAF, AQPE…APAL, and VPRS…APKA. N-linked (GlcNAc...) asparagine glycosylation is found at N257, N265, N386, and N548. Residues 698-718 traverse the membrane as a helical segment; that stretch reads VYLIIAICAVSSLLVLTLLLY. Over 719 to 950 the chain is Cytoplasmic; the sequence is TALRCSAPST…GNSTTDNSDQ (232 aa). PXXP repeat units lie at residues 799–802, 832–835, 873–876, and 891–894; these read PRQP, PGGP, PGNP, and PGSP. The interval 799 to 894 is 4 X 4 AA repeats of P-X-X-P; that stretch reads PRQPNPDWRY…PDKFIIPGSP (96 aa). The tract at residues 830 to 889 is disordered; sequence AGPGGPDQQWPTVSSATPEPEAGEVSPPVGAGVNSNSWTFKYGPGNPKQSGPGELPDKFI. The tract at residues 901 to 950 is disordered; sequence QEPANSQIDKSDFITFGKKEETKKKKKKKKGNKTQEKKEKGNSTTDNSDQ. A compositionally biased stretch (basic and acidic residues) spans 909–923; sequence DKSDFITFGKKEETK.

The protein localises to the cell membrane. Functionally, potential calcium-dependent cell-adhesion protein. May be involved in the establishment and maintenance of specific neuronal connections in the brain. The sequence is that of Protocadherin alpha-6 (PCDHA6) from Pan troglodytes (Chimpanzee).